The chain runs to 37 residues: Large ribosomal subunit protein bL36 (37 aa).

The protein belongs to the bacterial ribosomal protein bL36 family.

The sequence is that of Large ribosomal subunit protein bL36 from Alkaliphilus metalliredigens (strain QYMF).